Reading from the N-terminus, the 200-residue chain is MDLVLKRAFDIFSSLSALLVLAPFLLFVALLIKLDSPGPVLFKQTRWGKNCKAIKVYKFRSMRTDLCDVSGVAQTVKNDPRITRIGAILRRTNVDELPQLLNVLLGHMSVVGPRCHAIGMRAGGMLYEELVPEYHQRHAMRPGMTGLAQMRGLRGPTDRPAKARARIASDLYYVGNFSIVMDMRIIFGTVVSELTRGKGF.

The protein belongs to the bacterial sugar transferase family.

The protein is Exopolysaccharide production protein PSS (pss) of Rhizobium leguminosarum bv. phaseoli.